Here is a 442-residue protein sequence, read N- to C-terminus: tRNA modification GTPase MnmE (442 aa).

Residues R27, E84, and K124 each contribute to the (6S)-5-formyl-5,6,7,8-tetrahydrofolate site. Residues G221–E366 form the TrmE-type G domain. GTP-binding positions include N231–S236, S250–T256, and D275–G278. Residues S235 and T256 each contribute to the Mg(2+) site. Position 442 (K442) interacts with (6S)-5-formyl-5,6,7,8-tetrahydrofolate.

This sequence belongs to the TRAFAC class TrmE-Era-EngA-EngB-Septin-like GTPase superfamily. TrmE GTPase family. As to quaternary structure, homodimer. Heterotetramer of two MnmE and two MnmG subunits. K(+) serves as cofactor.

It is found in the cytoplasm. Exhibits a very high intrinsic GTPase hydrolysis rate. Involved in the addition of a carboxymethylaminomethyl (cmnm) group at the wobble position (U34) of certain tRNAs, forming tRNA-cmnm(5)s(2)U34. This chain is tRNA modification GTPase MnmE, found in Brucella anthropi (strain ATCC 49188 / DSM 6882 / CCUG 24695 / JCM 21032 / LMG 3331 / NBRC 15819 / NCTC 12168 / Alc 37) (Ochrobactrum anthropi).